Reading from the N-terminus, the 339-residue chain is DNA-directed RNA polymerase subunit alpha (339 aa).

The segment at 1–235 (MTIQKNWQEL…DQLNVFVNFE (235 aa)) is alpha N-terminal domain (alpha-NTD). An alpha C-terminal domain (alpha-CTD) region spans residues 251 to 339 (FNPAFLKKVD…ELAKRFEDHY (89 aa)).

Belongs to the RNA polymerase alpha chain family. As to quaternary structure, homodimer. The RNAP catalytic core consists of 2 alpha, 1 beta, 1 beta' and 1 omega subunit. When a sigma factor is associated with the core the holoenzyme is formed, which can initiate transcription.

It catalyses the reaction RNA(n) + a ribonucleoside 5'-triphosphate = RNA(n+1) + diphosphate. Functionally, DNA-dependent RNA polymerase catalyzes the transcription of DNA into RNA using the four ribonucleoside triphosphates as substrates. The chain is DNA-directed RNA polymerase subunit alpha from Rhodopseudomonas palustris (strain BisA53).